A 509-amino-acid chain; its full sequence is Maturase K (509 aa).

This sequence belongs to the intron maturase 2 family. MatK subfamily.

It localises to the plastid. The protein localises to the chloroplast. Functionally, usually encoded in the trnK tRNA gene intron. Probably assists in splicing its own and other chloroplast group II introns. This Arpophyllum giganteum (Hyacinth orchid) protein is Maturase K.